We begin with the raw amino-acid sequence, 775 residues long: MNEKKKDSLSVLDSNEFFGETTMVSPSIDVSSSPRPNVERFSPCSTKKDLLEGNNIMTRIPEELSRVSLQFDSKGSQQSMIFTNNRCLSDKENLENLQNLLYLHCDLNRPHLSCELPSEHREKCLKRRNSSLSSNLHANKRFLFNSQSDGNKKNETFPSTNYSNVFYPNNCDSKEVASETTFSLDAPNNSVNYSYFSPNLLGNDSKTRQSFPPHSSSSSHNSLHEPVIYDFSSENPSIHPSNHLSSQKNAVLKLAQLISSFEKLPESVRQYLLFHLLSRCGKHAVQNIHKILLPIFQKNFLTGFPAEITNLVLTHLDAPSLCAVSQVSHHWYKLVSSNEELWKSLFLKDGFFWDSIDSKIRTMCLEQSLSACAIMKRVYFRHFNLRERWLHAPEKIKRCSFPIHGVRLITKLQFDDDKIIVSTCSPRINIYDTKTGVLIRSLEEHEGDVWTFEYVGDTLVTGSTDRTVRVWDLRTGECKQVFYGHTSTIRCIKIVQGNQSTTDTDDVEKENRPASNDANSMPPYIISSSRDCTIRLWSLPCLDDPPFVNVNENPDQNNDFTSATTNPFYIRTLRGHTDSVREVACLGDLIVSASYDGTLRVWKASTGVCLHVLRGHVGRVYSVTINPSRQQCISAGTDAKIRIWNLESGELLQTLHGHSNLVSQVTFNQNILVSASAPPDTSLRVWDLNTGSCRDILKCPLGHIFFQHDESKVVSGSHSTLQLWDIRSGKLVRDLLTDLDIIWQVAYNENVCVAAVLRNNRFWIEVLEFGSTKSS.

One can recognise an F-box domain in the interval 298–345 (KNFLTGFPAEITNLVLTHLDAPSLCAVSQVSHHWYKLVSSNEELWKSL). WD repeat units lie at residues 444 to 472 (EHEG…RVWD), 484 to 538 (GHTS…RLWS), 575 to 603 (GHTD…RVWK), 615 to 645 (GHVG…RIWN), and 657 to 687 (GHSN…RVWD).

In terms of assembly, homodimer and heterodimer with pop2. Binds to cdc18, phosphorylated cig2, cul1, pip1 and skp1.

It is found in the nucleus. Involved in maintenance of ploidy through proteasome dependent degradation of CDK inhibitor rum1 and S-phase initiator cdc18. Functions as a recognition factor for rum1 and cdc18, which are subsequently ubiquitinated and targeted to the 26S proteasome for degradation. Together with pop2, required for cig2 instability during G2 and M phase and cig2 degradation in exponentially growing cells. Regulates cell-cycle progression under starvation through the rum1 protein. This is WD repeat-containing protein pop1 (pop1) from Schizosaccharomyces pombe (strain 972 / ATCC 24843) (Fission yeast).